A 477-amino-acid chain; its full sequence is MSPQTETKASVGFKAGVKEYKLTYYTPEYETKDTDILAAFRVTPQPGVPPEEAGAAVAAESSTGTWTTVWTDGLTSLDRYKGRCYHIEPVPGEADQYICYVAYPLDLFEEGSVTNMFTSIVGNVFGFKALRALRLEDLRIPVAYVKTFQGPPHGIQVERDKLNKYGRPLLGCTIKPKLGLSAKNYGRACYECLRGGLDFTKDDENVNSQPFMRWRDRFLFCAEAIYKSQAETGEIKGHYLNATAGTCEEMMKRAVFARELGVPIIMHDYLTGGFTANTSLAHYCRDNGLLLHIHRAMHAVIDRQKNHGIHFRVLAKALRMSGGDHIHSGTVVGKLEGEREITLGFVDLLRDDFIEKDRSRGIYFTQDWVSLPGVIPVASGGIHVWHMPALTEIFGDDSVLQFGGGTLGHPWGNAPGAVANRVALEACVKARNEGRDLAQEGNEIIREACKWSPELAAACEVWKEIVFNFAAVDVLDK.

Residues methionine 1–serine 2 constitute a propeptide that is removed on maturation. Residue proline 3 is modified to N-acetylproline. Position 14 is an N6,N6,N6-trimethyllysine (lysine 14). Residues asparagine 123 and threonine 173 each coordinate substrate. Lysine 175 acts as the Proton acceptor in catalysis. Lysine 177 contacts substrate. Residues lysine 201, aspartate 203, and glutamate 204 each coordinate Mg(2+). Lysine 201 is subject to N6-carboxylysine. Histidine 294 acts as the Proton acceptor in catalysis. Substrate is bound by residues arginine 295, histidine 327, and serine 379.

Belongs to the RuBisCO large chain family. Type I subfamily. As to quaternary structure, heterohexadecamer of 8 large chains and 8 small chains; disulfide-linked. The disulfide link is formed within the large subunit homodimers. The cofactor is Mg(2+). In terms of processing, the disulfide bond which can form in the large chain dimeric partners within the hexadecamer appears to be associated with oxidative stress and protein turnover.

The protein localises to the plastid. The protein resides in the chloroplast. It catalyses the reaction 2 (2R)-3-phosphoglycerate + 2 H(+) = D-ribulose 1,5-bisphosphate + CO2 + H2O. It carries out the reaction D-ribulose 1,5-bisphosphate + O2 = 2-phosphoglycolate + (2R)-3-phosphoglycerate + 2 H(+). In terms of biological role, ruBisCO catalyzes two reactions: the carboxylation of D-ribulose 1,5-bisphosphate, the primary event in carbon dioxide fixation, as well as the oxidative fragmentation of the pentose substrate in the photorespiration process. Both reactions occur simultaneously and in competition at the same active site. The polypeptide is Ribulose bisphosphate carboxylase large chain (Digitalis purpurea (Common foxglove)).